Consider the following 62-residue polypeptide: Photosystem II reaction center protein Z (62 aa).

Transmembrane regions (helical) follow at residues 8–28 (AVFASIAIPFILVIGVPVVLA) and 41–61 (FSGASSWIGLVFLVGILNSLI).

It belongs to the PsbZ family. As to quaternary structure, PSII is composed of 1 copy each of membrane proteins PsbA, PsbB, PsbC, PsbD, PsbE, PsbF, PsbH, PsbI, PsbJ, PsbK, PsbL, PsbM, PsbT, PsbY, PsbZ, Psb30/Ycf12, at least 3 peripheral proteins of the oxygen-evolving complex and a large number of cofactors. It forms dimeric complexes.

It is found in the plastid. The protein localises to the chloroplast thylakoid membrane. Its function is as follows. May control the interaction of photosystem II (PSII) cores with the light-harvesting antenna, regulates electron flow through the 2 photosystem reaction centers. PSII is a light-driven water plastoquinone oxidoreductase, using light energy to abstract electrons from H(2)O, generating a proton gradient subsequently used for ATP formation. The protein is Photosystem II reaction center protein Z of Huperzia lucidula (Shining clubmoss).